The sequence spans 396 residues: Elongation factor Tu (396 aa).

A tr-type G domain is found at 10–206; that stretch reads KPHVNIGTIG…AVDESVPEPV (197 aa). A G1 region spans residues 19–26; sequence GHVDHGKT. 19–26 contributes to the GTP binding site; the sequence is GHVDHGKT. Threonine 26 contributes to the Mg(2+) binding site. The G2 stretch occupies residues 62-66; the sequence is GITIN. Positions 83-86 are G3; that stretch reads DAPG. Residues 83–87 and 138–141 each bind GTP; these read DAPGH and NKSD. Residues 138-141 form a G4 region; that stretch reads NKSD. A G5 region spans residues 176 to 178; that stretch reads SGL.

Belongs to the TRAFAC class translation factor GTPase superfamily. Classic translation factor GTPase family. EF-Tu/EF-1A subfamily. Monomer.

It localises to the cytoplasm. The catalysed reaction is GTP + H2O = GDP + phosphate + H(+). Functionally, GTP hydrolase that promotes the GTP-dependent binding of aminoacyl-tRNA to the A-site of ribosomes during protein biosynthesis. In Beutenbergia cavernae (strain ATCC BAA-8 / DSM 12333 / CCUG 43141 / JCM 11478 / NBRC 16432 / NCIMB 13614 / HKI 0122), this protein is Elongation factor Tu.